We begin with the raw amino-acid sequence, 447 residues long: Glutamate--tRNA ligase 1 (447 aa).

The 'HIGH' region signature appears at 10–20; sequence PSPTGMLHVGN. A 'KMSKS' region motif is present at residues 240 to 244; that stretch reads KISKR. K243 is an ATP binding site.

Belongs to the class-I aminoacyl-tRNA synthetase family. Glutamate--tRNA ligase type 1 subfamily. As to quaternary structure, monomer.

The protein localises to the cytoplasm. It carries out the reaction tRNA(Glu) + L-glutamate + ATP = L-glutamyl-tRNA(Glu) + AMP + diphosphate. Catalyzes the attachment of glutamate to tRNA(Glu) in a two-step reaction: glutamate is first activated by ATP to form Glu-AMP and then transferred to the acceptor end of tRNA(Glu). This Rickettsia felis (strain ATCC VR-1525 / URRWXCal2) (Rickettsia azadi) protein is Glutamate--tRNA ligase 1.